Reading from the N-terminus, the 141-residue chain is Large ribosomal subunit protein uL11 (141 aa).

It belongs to the universal ribosomal protein uL11 family. As to quaternary structure, part of the ribosomal stalk of the 50S ribosomal subunit. Interacts with L10 and the large rRNA to form the base of the stalk. L10 forms an elongated spine to which L12 dimers bind in a sequential fashion forming a multimeric L10(L12)X complex. One or more lysine residues are methylated.

In terms of biological role, forms part of the ribosomal stalk which helps the ribosome interact with GTP-bound translation factors. The sequence is that of Large ribosomal subunit protein uL11 from Streptococcus agalactiae serotype Ia (strain ATCC 27591 / A909 / CDC SS700).